A 449-amino-acid polypeptide reads, in one-letter code: UDP-N-acetylmuramoylalanine--D-glutamate ligase (449 aa).

113–119 (GTNGKTT) is a binding site for ATP.

This sequence belongs to the MurCDEF family.

The protein localises to the cytoplasm. The enzyme catalyses UDP-N-acetyl-alpha-D-muramoyl-L-alanine + D-glutamate + ATP = UDP-N-acetyl-alpha-D-muramoyl-L-alanyl-D-glutamate + ADP + phosphate + H(+). Its pathway is cell wall biogenesis; peptidoglycan biosynthesis. Its function is as follows. Cell wall formation. Catalyzes the addition of glutamate to the nucleotide precursor UDP-N-acetylmuramoyl-L-alanine (UMA). In Gloeothece citriformis (strain PCC 7424) (Cyanothece sp. (strain PCC 7424)), this protein is UDP-N-acetylmuramoylalanine--D-glutamate ligase.